Here is a 290-residue protein sequence, read N- to C-terminus: Acetyl-coenzyme A carboxylase carboxyl transferase subunit beta (290 aa).

A CoA carboxyltransferase N-terminal domain is found at 28-290 (VMTKCPQCKK…GGGESGWWRN (263 aa)). Zn(2+) contacts are provided by cysteine 32, cysteine 35, cysteine 51, and cysteine 54. Residues 32 to 54 (CPQCKKIMYTKELVKNLRVCLSC) form a C4-type zinc finger.

It belongs to the AccD/PCCB family. As to quaternary structure, acetyl-CoA carboxylase is a heterohexamer composed of biotin carboxyl carrier protein (AccB), biotin carboxylase (AccC) and two subunits each of ACCase subunit alpha (AccA) and ACCase subunit beta (AccD). It depends on Zn(2+) as a cofactor.

It is found in the cytoplasm. The enzyme catalyses N(6)-carboxybiotinyl-L-lysyl-[protein] + acetyl-CoA = N(6)-biotinyl-L-lysyl-[protein] + malonyl-CoA. It functions in the pathway lipid metabolism; malonyl-CoA biosynthesis; malonyl-CoA from acetyl-CoA: step 1/1. Functionally, component of the acetyl coenzyme A carboxylase (ACC) complex. Biotin carboxylase (BC) catalyzes the carboxylation of biotin on its carrier protein (BCCP) and then the CO(2) group is transferred by the transcarboxylase to acetyl-CoA to form malonyl-CoA. This is Acetyl-coenzyme A carboxylase carboxyl transferase subunit beta from Geobacillus thermodenitrificans (strain NG80-2).